The primary structure comprises 221 residues: uncharacterized protein (221 aa).

Positions 1-30 (MAKFNNNILLIILIIVILFIIFYFLNKNNQ) are cleaved as a signal peptide.

The protein localises to the virion. This is an uncharacterized protein from Acanthamoeba polyphaga mimivirus (APMV).